We begin with the raw amino-acid sequence, 476 residues long: Rab-3A-interacting protein (476 aa).

Residues Ser163 and Ser165 each carry the phosphoserine; by PKB/AKT1 modification. Residues 165-260 (SVLEVREKGY…EVAALKTLVL (96 aa)) adopt a coiled-coil conformation. The tract at residues 262–297 (SSPTSPTQEPLPGGKTPFKKGHTRNKSTSSAMSGSH) is disordered. 4 positions are modified to phosphoserine: Ser263, Ser266, Ser288, and Ser296. Residues 287 to 297 (KSTSSAMSGSH) show a composition bias toward polar residues. The interval 435-444 (TYIRYIQQGL) is important for RAB11A binding.

The protein belongs to the SEC2 family. Homodimer. Interacts with the N-terminal region of SSX2. Interacts with the GDP-bound forms of RAB8A and RAB8B. The interaction with RAB8A is prevented by phosphorylation of RAB8A at 'Thr-72'. Interacts with the GDP-bound forms of RAB3A and RAB3D. Interacts with DCDC1. Interacts (via the N-terminal region) with TRAPPC14; this interaction mediates RAB3IP association with the TRAPP II complex. Forms a heterotetramer with RAB11A where RAB3IP homodimer binds two RAB11A subunits. Forms a complex with RAB11A and RAB11FIP3, probably a heterohexamer with two of each protein subunit, where Rabin8/RAB3IP and RAB11FIP3 simultaneously bind to RAB11A; the complex promotes preciliary trafficking. Forms a complex containing RAB11A, ASAP1, RAB3IP, RAP11FIP3 and ARF4; the complex promotes preciliary trafficking; the complex binds to RHO in photoreceptor cells and promotes RHO ciliary transport. Phosphorylated by AKT1; the phosphorylation alters its GEF activity. As to expression, expressed in brain, kidney, heart, pancreas and placenta. Not detected in skeletal muscle or liver.

It localises to the cytoplasm. The protein localises to the nucleus. The protein resides in the cytoskeleton. Its subcellular location is the cell projection. It is found in the lamellipodium. It localises to the vesicle. The protein localises to the microtubule organizing center. The protein resides in the centrosome. Its activity is regulated as follows. Phosphorylation by ATK1 alters its GEF activity. Complex formation with RAB11A and RAB11FIP3 and ciliogenesis function are competitively inhibited by RAB11A-WDR44 interaction. Functionally, guanine nucleotide exchange factor (GEF) which may activate RAB8A and RAB8B. Promotes the exchange of GDP to GTP, converting inactive GDP-bound Rab proteins into their active GTP-bound form. Mediates the release of GDP from RAB8A and RAB8B but not from RAB3A or RAB5. Modulates actin organization and promotes polarized transport of RAB8A-specific vesicles to the cell surface. Together with RAB11A, RAB8A, the exocyst complex, PARD3, PRKCI, ANXA2, CDC42 and DNMBP promotes transcytosis of PODXL to the apical membrane initiation sites (AMIS), apical surface formation and lumenogenesis. Part of the ciliary targeting complex containing Rab11, ASAP1, RAB3IP and RAB11FIP3 and ARF4 that promotes RAB3IP preciliary vesicle trafficking to mother centriole and ciliogenesis initiation. The sequence is that of Rab-3A-interacting protein from Homo sapiens (Human).